The sequence spans 468 residues: Protein wingless (468 aa).

The first 17 residues, 1–17 (MDISYIFVICLMALCSG), serve as a signal peptide directing secretion. The binds porcupine stretch occupies residues 83-106 (VKGANLAISECQHQFRNRRWNCST). A disulfide bridge links Cys93 with Cys104. N-linked (GlcNAc...) asparagine glycosylation is found at Asn103 and Asn108. 4 disulfide bridges follow: Cys146–Cys154, Cys156–Cys185, Cys233–Cys247, and Cys235–Cys242. The O-palmitoleoyl serine; by PORCN moiety is linked to residue Ser239. The disordered stretch occupies residues 333–362 (ISKIHHPNMPSPNSLPQAGQRGGRNGRRQG). Disulfide bonds link Cys397/Cys428, Cys413/Cys423, Cys427/Cys467, Cys443/Cys458, Cys445/Cys455, and Cys450/Cys451. N-linked (GlcNAc...) asparagine glycosylation is present at Asn414.

Belongs to the Wnt family. In terms of assembly, monomer; folds by intramolecular disulfide bonds. Interacts with porcupine (por). Interacts with wls; in the Golgi. Interacts with en. Interacts with the proteoglycan Cow (heparan sulfate-bound form); this stabilizes wg and promotes its extracellular distribution. Interacts with peg; the interaction facilitates short-range diffusion of wg. In terms of processing, palmitoleoylated by porcupine. The lipid group functions as a sorting signal, targeting the ligand to polarized vesicles that transport wg to unique sites at the cell surface. Depalmitoleoylated by notum, leading to inhibit Wnt signaling pathway. Major form is glycosylated at 2 sites, glycosylation is stimulated by porcupine at the ER. In terms of tissue distribution, segmented expression in embryos. In embryonic tracheal cells, expression is in stripes flanking the tracheal placode.

The protein localises to the secreted. It is found in the synapse. The protein resides in the membrane. Its subcellular location is the extracellular space. It localises to the extracellular matrix. Binds as a ligand to a family of frizzled seven-transmembrane receptors and acts through a cascade of genes on the nucleus. Segment polarity protein. May be a growth factor. Acts on neighboring cells to regulate at least one gene, the homeobox segmentation gene engrailed. Wg signal represses arm phosphorylation. Wg signaling operates by inactivating the sgg repression of engrailed autoactivation. Wg and Wnt2 have a role in the developing trachea and together are responsible for all dorsal trunk formation. Wg also acts in the developing epidermis. Acts as a morphogen, and diffuses long distances despite its lipidation. Lipophorin is required for diffusion, probably by acting as vehicle for its movement, explaining how it can spread over long distances despite its lipidation. In non-neuronal cells, wls directs wg secretion via clathrin-mediated endocytosis and the retromer complex (a conserved protein complex consisting of Vps26 and Vps35) to sustain a wls traffic loop encompassing the Golgi, the cell surface, an endocytic compartment and a retrograde route leading back to the Golgi. In neuronal cells (the larval motorneuron NMJ), wg signal moves across the synapse through the release of wls-containing exosome-like vesicles. This Drosophila melanogaster (Fruit fly) protein is Protein wingless (wg).